Here is a 914-residue protein sequence, read N- to C-terminus: DNA mismatch repair protein MutS (914 aa).

The interval 1–25 (MDKKNDHKNNLIPQPASSFASSQER) is disordered. The segment covering 11 to 25 (LIPQPASSFASSQER) has biased composition (polar residues). 662–669 (GPNMGGKS) is a binding site for ATP.

Belongs to the DNA mismatch repair MutS family.

This protein is involved in the repair of mismatches in DNA. It is possible that it carries out the mismatch recognition step. This protein has a weak ATPase activity. In Bartonella tribocorum (strain CIP 105476 / IBS 506), this protein is DNA mismatch repair protein MutS.